The primary structure comprises 261 residues: Ribonuclease HII (261 aa).

Residues 72–260 (AVICGIDEVG…IKSIVLEKLD (189 aa)) form the RNase H type-2 domain. A divalent metal cation contacts are provided by Asp-78, Glu-79, and Asp-170.

This sequence belongs to the RNase HII family. It depends on Mn(2+) as a cofactor. Mg(2+) serves as cofactor.

The protein localises to the cytoplasm. It catalyses the reaction Endonucleolytic cleavage to 5'-phosphomonoester.. Endonuclease that specifically degrades the RNA of RNA-DNA hybrids. The polypeptide is Ribonuclease HII (Staphylococcus carnosus (strain TM300)).